The sequence spans 112 residues: Putative acyl carrier protein, mitochondrial (112 aa).

The transit peptide at 1 to 28 directs the protein to the mitochondrion; it reads MLSRFSSQLRFISAVRPVIPKFQPLRFY. The Carrier domain occupies 33-109; the sequence is PDAEKRILKV…DAISYITKNP (77 aa). An O-(pantetheine 4'-phosphoryl)serine modification is found at Ser-69.

This sequence belongs to the acyl carrier protein (ACP) family. 4'-phosphopantetheine is transferred from CoA to a specific serine of apo-ACP by acpS. This modification is essential for activity because fatty acids are bound in thioester linkage to the sulfhydryl of the prosthetic group.

Its subcellular location is the mitochondrion. The protein operates within lipid metabolism; fatty acid biosynthesis. Carrier of the growing fatty acid chain in fatty acid biosynthesis. May be involved in the synthesis of very-long-chain fatty acids. This Schizosaccharomyces pombe (strain 972 / ATCC 24843) (Fission yeast) protein is Putative acyl carrier protein, mitochondrial.